Reading from the N-terminus, the 358-residue chain is Flap endonuclease 1 (358 aa).

Residues 1–103 (MGIKRLSKLI…HEFEKRTKRR (103 aa)) form an N-domain region. Asp-34 serves as a coordination point for Mg(2+). Positions 47 and 69 each coordinate DNA. Mg(2+)-binding residues include Asp-85, Glu-157, Glu-159, Asp-178, and Asp-180. The tract at residues 121-252 (LVSKYDRMNV…KRAFEYIKKY (132 aa)) is I-domain. Residue Glu-157 participates in DNA binding. DNA is bound by residues Gly-230 and Asp-232. Asp-232 provides a ligand contact to Mg(2+). Positions 346 to 354 (KQTRIDSFF) are interaction with PCNA.

It belongs to the XPG/RAD2 endonuclease family. FEN1 subfamily. Interacts with PCNA. Three molecules of FEN1 bind to one PCNA trimer with each molecule binding to one PCNA monomer. PCNA stimulates the nuclease activity without altering cleavage specificity. Mg(2+) is required as a cofactor. In terms of processing, phosphorylated. Phosphorylation upon DNA damage induces relocalization to the nuclear plasma.

The protein localises to the nucleus. Its subcellular location is the nucleolus. It localises to the nucleoplasm. It is found in the mitochondrion. Its function is as follows. Structure-specific nuclease with 5'-flap endonuclease and 5'-3' exonuclease activities involved in DNA replication and repair. During DNA replication, cleaves the 5'-overhanging flap structure that is generated by displacement synthesis when DNA polymerase encounters the 5'-end of a downstream Okazaki fragment. It enters the flap from the 5'-end and then tracks to cleave the flap base, leaving a nick for ligation. Also involved in the long patch base excision repair (LP-BER) pathway, by cleaving within the apurinic/apyrimidinic (AP) site-terminated flap. Acts as a genome stabilization factor that prevents flaps from equilibrating into structures that lead to duplications and deletions. Also possesses 5'-3' exonuclease activity on nicked or gapped double-stranded DNA, and exhibits RNase H activity. Also involved in replication and repair of rDNA and in repairing mitochondrial DNA. The polypeptide is Flap endonuclease 1 (Enterocytozoon bieneusi (strain H348) (Microsporidian parasite)).